We begin with the raw amino-acid sequence, 157 residues long: SsrA-binding protein (157 aa).

Belongs to the SmpB family.

The protein localises to the cytoplasm. Its function is as follows. Required for rescue of stalled ribosomes mediated by trans-translation. Binds to transfer-messenger RNA (tmRNA), required for stable association of tmRNA with ribosomes. tmRNA and SmpB together mimic tRNA shape, replacing the anticodon stem-loop with SmpB. tmRNA is encoded by the ssrA gene; the 2 termini fold to resemble tRNA(Ala) and it encodes a 'tag peptide', a short internal open reading frame. During trans-translation Ala-aminoacylated tmRNA acts like a tRNA, entering the A-site of stalled ribosomes, displacing the stalled mRNA. The ribosome then switches to translate the ORF on the tmRNA; the nascent peptide is terminated with the 'tag peptide' encoded by the tmRNA and targeted for degradation. The ribosome is freed to recommence translation, which seems to be the essential function of trans-translation. The chain is SsrA-binding protein from Clostridium kluyveri (strain NBRC 12016).